Consider the following 159-residue polypeptide: MSEFTHFDESGRAIMVDVAGKDDTRRVATARGAIHMLPDTLGRILGGQAAKGDVLAVARIAAIQATKRTADLIPLCHPIALTRVVVDFAPETEVSRIVCTVTAETVGKTGVEMEALTGVSVALLTIYDMCKAVDRGMQIGDIQLVEKQGGRSGHWRLPD.

Substrate contacts are provided by residues 75–77 and 113–114; these read LCH and ME. The active site involves Asp128.

Belongs to the MoaC family. As to quaternary structure, homohexamer; trimer of dimers.

The enzyme catalyses (8S)-3',8-cyclo-7,8-dihydroguanosine 5'-triphosphate = cyclic pyranopterin phosphate + diphosphate. It participates in cofactor biosynthesis; molybdopterin biosynthesis. Functionally, catalyzes the conversion of (8S)-3',8-cyclo-7,8-dihydroguanosine 5'-triphosphate to cyclic pyranopterin monophosphate (cPMP). This chain is Cyclic pyranopterin monophosphate synthase, found in Thiobacillus denitrificans (strain ATCC 25259 / T1).